Consider the following 301-residue polypeptide: Tyrosine recombinase XerC (301 aa).

A Core-binding (CB) domain is found at 2-84 (TNTQFYITNF…TLRSFFSYLY (83 aa)). The region spanning 105-291 (ALPKFLTVDD…DLKHLIEVYD (187 aa)) is the Tyr recombinase domain. Residues arginine 145, lysine 169, histidine 243, arginine 246, and histidine 269 contribute to the active site. The active-site O-(3'-phospho-DNA)-tyrosine intermediate is tyrosine 278.

It belongs to the 'phage' integrase family. XerC subfamily. As to quaternary structure, forms a cyclic heterotetrameric complex composed of two molecules of XerC and two molecules of XerD.

It localises to the cytoplasm. In terms of biological role, site-specific tyrosine recombinase, which acts by catalyzing the cutting and rejoining of the recombining DNA molecules. The XerC-XerD complex is essential to convert dimers of the bacterial chromosome into monomers to permit their segregation at cell division. It also contributes to the segregational stability of plasmids. The sequence is that of Tyrosine recombinase XerC from Thermodesulfovibrio yellowstonii (strain ATCC 51303 / DSM 11347 / YP87).